The chain runs to 228 residues: Ribonuclease 3 (228 aa).

An RNase III domain is found at 5-127 (LTALQERLKH…LIGAVYLDAG (123 aa)). Glutamate 40 serves as a coordination point for Mg(2+). Aspartate 44 is an active-site residue. Residues aspartate 113 and glutamate 116 each coordinate Mg(2+). Residue glutamate 116 is part of the active site. The DRBM domain maps to 154-224 (DPKTELQEWL…AAAMLIRLKA (71 aa)).

Belongs to the ribonuclease III family. As to quaternary structure, homodimer. Mg(2+) is required as a cofactor.

It localises to the cytoplasm. The catalysed reaction is Endonucleolytic cleavage to 5'-phosphomonoester.. Digests double-stranded RNA. Involved in the processing of primary rRNA transcript to yield the immediate precursors to the large and small rRNAs (23S and 16S). Processes some mRNAs, and tRNAs when they are encoded in the rRNA operon. Processes pre-crRNA and tracrRNA of type II CRISPR loci if present in the organism. The protein is Ribonuclease 3 of Variovorax paradoxus (strain S110).